We begin with the raw amino-acid sequence, 172 residues long: MNLLDYLPGVPDFPKPGILFRDISPLLANPAAFKETIAQLDALAKTFDYTHILGIESRGFIFGSALAHHAHKGFAIARKPNKLPLASHREQYGLEYGSDSLEIQQSTLPTNAKVLLIDDVLATGGTLIAADKLLRSAGFQVSGAITLLEIAVLNGSEQLEKNHIHHKSVLRS.

Belongs to the purine/pyrimidine phosphoribosyltransferase family. Homodimer.

The protein resides in the cytoplasm. It catalyses the reaction AMP + diphosphate = 5-phospho-alpha-D-ribose 1-diphosphate + adenine. It participates in purine metabolism; AMP biosynthesis via salvage pathway; AMP from adenine: step 1/1. In terms of biological role, catalyzes a salvage reaction resulting in the formation of AMP, that is energically less costly than de novo synthesis. This is Adenine phosphoribosyltransferase from Polynucleobacter asymbioticus (strain DSM 18221 / CIP 109841 / QLW-P1DMWA-1) (Polynucleobacter necessarius subsp. asymbioticus).